A 526-amino-acid chain; its full sequence is Efflux pump aunC (526 aa).

14 helical membrane passes run 23 to 43 (LCYK…CTSL), 64 to 84 (DVGW…LPFG), 89 to 109 (FFPI…GSFI), 125 to 145 (VAGL…TQCV), 155 to 175 (GFIM…GGAF), 183 to 203 (WCFY…FFTF), 218 to 238 (AAGL…CLLL), 254 to 274 (IIAL…LQLW), 296 to 316 (LYGF…PIWF), 339 to 359 (VIFA…GPFM), 360 to 380 (LLSA…HPSS), 386 to 406 (IGYQ…PVFV), 418 to 438 (TATA…VSVA), and 491 to 511 (VHTF…ATVI).

The protein belongs to the major facilitator superfamily. TCR/Tet family.

The protein resides in the cell membrane. In terms of biological role, efflux pump; part of the gene cluster that mediates the biosynthesis of aurasperone B, a dimeric gamma-naphthopyrone. The sequence is that of Efflux pump aunC from Aspergillus niger (strain ATCC 1015 / CBS 113.46 / FGSC A1144 / LSHB Ac4 / NCTC 3858a / NRRL 328 / USDA 3528.7).